Reading from the N-terminus, the 233-residue chain is Endonuclease V (233 aa).

2 residues coordinate Mg(2+): D48 and D116.

The protein belongs to the endonuclease V family. Requires Mg(2+) as cofactor.

The protein localises to the cytoplasm. It catalyses the reaction Endonucleolytic cleavage at apurinic or apyrimidinic sites to products with a 5'-phosphate.. Its function is as follows. DNA repair enzyme involved in the repair of deaminated bases. Selectively cleaves double-stranded DNA at the second phosphodiester bond 3' to a deoxyinosine leaving behind the intact lesion on the nicked DNA. The chain is Endonuclease V from Streptomyces coelicolor (strain ATCC BAA-471 / A3(2) / M145).